The primary structure comprises 369 residues: Ferrochelatase (369 aa).

Residues His-210 and Glu-291 each contribute to the Fe cation site.

This sequence belongs to the ferrochelatase family.

It localises to the cytoplasm. The enzyme catalyses heme b + 2 H(+) = protoporphyrin IX + Fe(2+). Its pathway is porphyrin-containing compound metabolism; protoheme biosynthesis; protoheme from protoporphyrin-IX: step 1/1. Functionally, catalyzes the ferrous insertion into protoporphyrin IX. In Thioalkalivibrio sulfidiphilus (strain HL-EbGR7), this protein is Ferrochelatase.